The following is a 340-amino-acid chain: Methionine import ATP-binding protein MetN 2 (340 aa).

In terms of domain architecture, ABC transporter spans 2–241; it reads ITLQNVVKEY…PKEKVTQRFV (240 aa). An ATP-binding site is contributed by 38–45; sequence GYSGAGKS.

Belongs to the ABC transporter superfamily. Methionine importer (TC 3.A.1.24) family. The complex is composed of two ATP-binding proteins (MetN), two transmembrane proteins (MetI) and a solute-binding protein (MetQ).

The protein localises to the cell membrane. The catalysed reaction is L-methionine(out) + ATP + H2O = L-methionine(in) + ADP + phosphate + H(+). It carries out the reaction D-methionine(out) + ATP + H2O = D-methionine(in) + ADP + phosphate + H(+). In terms of biological role, part of the ABC transporter complex MetNIQ involved in methionine import. Responsible for energy coupling to the transport system. This is Methionine import ATP-binding protein MetN 2 from Listeria innocua serovar 6a (strain ATCC BAA-680 / CLIP 11262).